The chain runs to 121 residues: Large ribosomal subunit protein uL18 (121 aa).

Belongs to the universal ribosomal protein uL18 family. In terms of assembly, part of the 50S ribosomal subunit; part of the 5S rRNA/L5/L18/L25 subcomplex. Contacts the 5S and 23S rRNAs.

This is one of the proteins that bind and probably mediate the attachment of the 5S RNA into the large ribosomal subunit, where it forms part of the central protuberance. In Burkholderia mallei (strain NCTC 10247), this protein is Large ribosomal subunit protein uL18.